The following is a 61-amino-acid chain: Large ribosomal subunit protein uL30 (61 aa).

The protein belongs to the universal ribosomal protein uL30 family. In terms of assembly, part of the 50S ribosomal subunit.

This is Large ribosomal subunit protein uL30 from Nitrosomonas europaea (strain ATCC 19718 / CIP 103999 / KCTC 2705 / NBRC 14298).